Reading from the N-terminus, the 362-residue chain is DNA replication and repair protein RecF (362 aa).

Gly30–Thr37 is an ATP binding site.

This sequence belongs to the RecF family.

It is found in the cytoplasm. Functionally, the RecF protein is involved in DNA metabolism; it is required for DNA replication and normal SOS inducibility. RecF binds preferentially to single-stranded, linear DNA. It also seems to bind ATP. The protein is DNA replication and repair protein RecF of Agathobacter rectalis (strain ATCC 33656 / DSM 3377 / JCM 17463 / KCTC 5835 / VPI 0990) (Eubacterium rectale).